Consider the following 80-residue polypeptide: uncharacterized protein (80 aa).

This is an uncharacterized protein from Vaccinia virus (strain Copenhagen) (VACV).